Consider the following 364-residue polypeptide: Medium-wave-sensitive opsin 1 (364 aa).

The segment at 1–24 (MAQRWDPQRLAGGQPQDSHEDSTQ) is disordered. At 1-52 (MAQRWDPQRLAGGQPQDSHEDSTQSSIFTYTNSNATRGPFEGPNYHIAPRWV) the chain is on the extracellular side. The interval 17-43 (DSHEDSTQSSIFTYTNSNATRGPFEGP) is required for 11-cis-retinal regeneration. N34 carries an N-linked (GlcNAc...) asparagine glycan. The helical transmembrane segment at 53 to 77 (YHITSTWMIIVVIASVFTNGLVLVA) threads the bilayer. Residues 78–89 (TMKFKKLRHPLN) are Cytoplasmic-facing. The helical transmembrane segment at 90–115 (WILVNLAIADLAETVIASTISVVNQL) threads the bilayer. The Extracellular portion of the chain corresponds to 116 to 129 (YGYFVLGHPLCVVE). A disulfide bond links C126 and C203. The chain crosses the membrane as a helical span at residues 130 to 149 (GYTVSVCGITGLWSLAIISW). Residues 150-168 (ERWLVVCKPFGNMRFDAKL) are Cytoplasmic-facing. The helical transmembrane segment at 169–192 (AIVGIAFSWIWSAVWTAPPIFGWS) threads the bilayer. Topologically, residues 193–218 (RYWPYGLKTSCGPDVFSGTSYPGVQS) are extracellular. A helical membrane pass occupies residues 219–246 (YMMVLMVTCCIIPLSIIILCYLQVWLAI). Topologically, residues 247 to 268 (RAVAKQQKESESTQKAEKEVTR) are cytoplasmic. The helical transmembrane segment at 269–292 (MVVVMVFAYCLCWGPYTFFACFAT) threads the bilayer. Over 293–300 (ANPGYAFH) the chain is Extracellular. Residues 301 to 320 (PLVAALPAYFAKSATIYNPI) form a helical membrane-spanning segment. K312 is subject to N6-(retinylidene)lysine. Topologically, residues 321-364 (IYVFMNRQFRNCILQLFGKKVDDTSELSSASKTEASSVSSVSPA) are cytoplasmic.

Belongs to the G-protein coupled receptor 1 family. Opsin subfamily. In terms of assembly, monomer. Homodimer. Homotetramer. O-glycosylated. Post-translationally, phosphorylated on some or all of the serine and threonine residues present in the C-terminal region. In terms of tissue distribution, expressed in cone photoreceptor cells.

The protein resides in the membrane. Visual pigments are the light-absorbing molecules that mediate vision. They consist of an apoprotein, opsin, covalently linked to cis-retinal. May increase spectral sensitivity in dim light. The sequence is that of Medium-wave-sensitive opsin 1 (OPN1MW) from Sciurus carolinensis (Eastern gray squirrel).